We begin with the raw amino-acid sequence, 183 residues long: Gamma-crystallin N (183 aa).

Beta/gamma crystallin 'Greek key' domains are found at residues 6–46 (GKII…RVET), 47–89 (GAWI…KPVR), 95–136 (YRLE…KVYG), and 138–180 (GAWV…RRVV).

It belongs to the beta/gamma-crystallin family. As to quaternary structure, monomer.

Its function is as follows. Crystallins are the dominant structural components of the vertebrate eye lens. In Xenopus tropicalis (Western clawed frog), this protein is Gamma-crystallin N (crygn).